Here is a 606-residue protein sequence, read N- to C-terminus: Pyruvate decarboxylase 2 (606 aa).

Residues Asp68 and His155 each coordinate substrate. Residues Asp433–Ile515 form a thiamine pyrophosphate binding region. Mg(2+) is bound by residues Asp483, Asn510, and Gly512. Glu516 contributes to the substrate binding site.

It belongs to the TPP enzyme family. As to quaternary structure, homotetramer. Requires a metal cation as cofactor. Thiamine diphosphate is required as a cofactor.

It catalyses the reaction a 2-oxocarboxylate + H(+) = an aldehyde + CO2. The protein is Pyruvate decarboxylase 2 (PDC2) of Oryza sativa subsp. indica (Rice).